A 506-amino-acid polypeptide reads, in one-letter code: Cytochrome P450 monooxygenase TES1 (506 aa).

The helical transmembrane segment at 26 to 46 threads the bilayer; it reads MSVVLAGLILLASIYFPRFMF. Residues Asn167, Asn201, Asn298, and Asn427 are each glycosylated (N-linked (GlcNAc...) asparagine). A heme-binding site is contributed by Cys440.

The protein belongs to the cytochrome P450 family. Requires heme as cofactor.

It localises to the membrane. It functions in the pathway phytotoxin biosynthesis. In terms of biological role, cytochrome P450 monooxygenase; part of the gene cluster that mediates the biosynthesis of the phytotoxin tentoxin, an inhibitor the F1-ATPase activity of chloroplasts, resulting in chlorosis in sensitive plants. Tentoxin is a cyclic tetrapeptide that consists of four amino acid residues: glycine (Gly), alanine (Ala), leucine (Leu), and dehydrophenylalanine (DPhe). In addition, both the Ala and DPhe residues are N-methylated. The nonribosomal peptide synthetase TES assembles tentoxin from the four substrate amino acids. The adenylation domains of each of the 4 modules are responsible for the activation of Gly, Ala, Leu and DPhe, respectively. In addition, the N-methyltransferase domains in the second and fourth modules of TES could be responsible for N-methylation of Ala and DPhe residues. Finally, the condensation domain located in the termination module probably catalyzes the formation of the intramolecular macrocyclization and then the release of tentoxin. The cytochrome P450 monooxygenase TES1 is predicted to be involved in the formation of DPhe. The protein is Cytochrome P450 monooxygenase TES1 of Alternaria alternata (Alternaria rot fungus).